The sequence spans 179 residues: Signal peptidase complex catalytic subunit SEC11A (179 aa).

The Cytoplasmic portion of the chain corresponds to 1–16 (MLSLDFLDDVRRMNKR). The helical; Signal-anchor for type II membrane protein transmembrane segment at 17–36 (QLYYQVLNFGMIVSSALMIW) threads the bilayer. Residues 37–179 (KGLMLITGSE…LGLFVLVHRE (143 aa)) lie on the Lumenal side of the membrane. Catalysis depends on charge relay system residues Ser-56, His-96, and Asp-122. Positions 165–176 (AVLFLLGLFVLV) are C-terminal short (CTS) helix.

This sequence belongs to the peptidase S26B family. In terms of assembly, component of the signal peptidase complex paralog A (SPC-A) composed of a catalytic subunit SEC11A and three accessory subunits SPCS1, SPCS2 and SPCS3. Within the complex, interacts with SPCS2 and SPCS3. The complex induces a local thinning of the ER membrane which is used to measure the length of the signal peptide (SP) h-region of protein substrates. This ensures the selectivity of the complex towards h-regions shorter than 18-20 amino acids.

The protein localises to the endoplasmic reticulum membrane. The enzyme catalyses Cleavage of hydrophobic, N-terminal signal or leader sequences from secreted and periplasmic proteins.. Its function is as follows. Catalytic component of the signal peptidase complex (SPC) which catalyzes the cleavage of N-terminal signal sequences from nascent proteins as they are translocated into the lumen of the endoplasmic reticulum. Specifically cleaves N-terminal signal peptides that contain a hydrophobic alpha-helix (h-region) shorter than 18-20 amino acids. In Rattus norvegicus (Rat), this protein is Signal peptidase complex catalytic subunit SEC11A (Sec11a).